We begin with the raw amino-acid sequence, 465 residues long: GTPase Der (465 aa).

EngA-type G domains are found at residues 3-167 (PLVA…PEEG) and 179-352 (VRIA…ASAT). GTP-binding positions include 9 to 16 (GRPNVGKS), 57 to 61 (DTGGI), 119 to 122 (NKID), 185 to 192 (GRPNVGKS), 232 to 236 (DTAGL), and 297 to 300 (NKWD). One can recognise a KH-like domain in the interval 353–437 (HEFSTSEVNQ…PVRFIFREGA (85 aa)).

This sequence belongs to the TRAFAC class TrmE-Era-EngA-EngB-Septin-like GTPase superfamily. EngA (Der) GTPase family. As to quaternary structure, associates with the 50S ribosomal subunit.

Its function is as follows. GTPase that plays an essential role in the late steps of ribosome biogenesis. This Xanthomonas campestris pv. campestris (strain 8004) protein is GTPase Der.